The sequence spans 554 residues: Valerianol synthase TPS8 (554 aa).

The DDXXD motif signature appears at 288–292 (QHSVG). Residues D307, D311, D452, S456, and E460 each coordinate Mg(2+).

This sequence belongs to the terpene synthase family. Requires Mg(2+) as cofactor.

The enzyme catalyses (2E,6E)-farnesyl diphosphate + H2O = valerianol + diphosphate. Its pathway is secondary metabolite biosynthesis; terpenoid biosynthesis. Terpene synthase that catalyzes the biosynthesis of the terpene valerianol. This is Valerianol synthase TPS8 from Camellia sinensis (Tea plant).